The chain runs to 146 residues: Large ribosomal subunit protein uL15 (146 aa).

Residues 1-13 (MKLNELKPNEGSR) are compositionally biased toward basic and acidic residues. Residues 1–54 (MKLNELKPNEGSRRNRKRVGRGTSSGYGKTAGRGQKGQLARTGGKTRLGFEGGQ) form a disordered region. Residues 23 to 35 (TSSGYGKTAGRGQ) are compositionally biased toward gly residues.

It belongs to the universal ribosomal protein uL15 family. In terms of assembly, part of the 50S ribosomal subunit.

In terms of biological role, binds to the 23S rRNA. This is Large ribosomal subunit protein uL15 from Lactobacillus johnsonii (strain CNCM I-12250 / La1 / NCC 533).